The primary structure comprises 255 residues: Probable cyclic nucleotide phosphodiesterase syc0937_d (255 aa).

Positions 19, 21, 59, 89, 157, 196, and 198 each coordinate Fe cation. AMP-binding positions include His-21, Asp-59, and 89 to 90 (NH). His-198 serves as a coordination point for AMP.

Belongs to the cyclic nucleotide phosphodiesterase class-III family. It depends on Fe(2+) as a cofactor.

The protein is Probable cyclic nucleotide phosphodiesterase syc0937_d of Synechococcus sp. (strain ATCC 27144 / PCC 6301 / SAUG 1402/1) (Anacystis nidulans).